A 449-amino-acid chain; its full sequence is Anther-specific proline-rich protein APG (449 aa).

Positions 1 to 118 (PPKPQPKPPP…KPPAPSPPKP (118 aa)) are enriched in pro residues. Residues 1 to 123 (PPKPQPKPPP…SPPKPQNKTI (123 aa)) are disordered. Serine 132 (nucleophile) is an active-site residue. Active-site residues include aspartate 425 and histidine 428.

Belongs to the 'GDSL' lipolytic enzyme family. As to expression, found in anther, only in male fertile plants.

The protein is Anther-specific proline-rich protein APG (APG) of Brassica napus (Rape).